The chain runs to 394 residues: Immune-associated nucleotide-binding protein 12 (394 aa).

In terms of domain architecture, AIG1-type G spans 45–251 (KPARTLLLVG…YMADLSHEIR (207 aa)). The G1 stretch occupies residues 54–61 (GRSGNGKS). GTP is bound by residues 54-62 (GRSGNGKSA) and serine 75. Residues 81 to 85 (GVTTA) form a G2 region. Residues 103-106 (DTPG) form a G3 region. The tract at residues 173 to 176 (TNED) is G4. Residues 210–212 (RNR) are G5. Residue asparagine 211 participates in GTP binding. Residues 289–387 (NQQLRQMMER…KQMATDLQKS (99 aa)) are a coiled coil.

It belongs to the TRAFAC class TrmE-Era-EngA-EngB-Septin-like GTPase superfamily. AIG1/Toc34/Toc159-like paraseptin GTPase family. IAN subfamily.

The sequence is that of Immune-associated nucleotide-binding protein 12 from Arabidopsis thaliana (Mouse-ear cress).